We begin with the raw amino-acid sequence, 389 residues long: MSNFLPDSSCYELLTIIGRGFEDLMVVNLARYKPSGEYVTVRRVNLEACTNEMVTFLQGELHVSKLFNHPNIVPYKATFIADNELWVVTSFMAYGSAKDLICTHFMDGMSELAIAYILQGVLKALDYIHHMGYVHRSVKASHILISVDGKVYLSGLRSNLSMINHGQRLKVVHDFPKYSIKVLPWLSPEVLQQNLQGYDAKSDIYSIGITACELANGHVPFKDMPSTQMLLEKLNGTVPCLLDTTTIPADELTMKTSRSSANYGLGESTAVSNVRAANGESTLHPYLRTFSSCFHNFVGQCLQRNPDFRPSAGALLNHPFFKQIKRRASEALPELLRPVTPITNFEGTRPQDPSGILGWCQTWSSWMWMTGNSRKTKTALGSGGAFWTL.

One can recognise a Protein kinase domain in the interval 11-321 (YELLTIIGRG…AGALLNHPFF (311 aa)).

This sequence belongs to the protein kinase superfamily. STE Ser/Thr protein kinase family. STE20 subfamily. In terms of assembly, component of a trimeric complex composed of STK11/LKB1, STRAD (STRADA or STRADB) and CAB39/MO25 (CAB39/MO25alpha or CAB39L/MO25beta): the complex tethers STK11/LKB1 in the cytoplasm and stimulates its catalytic activity. Expressed in brain, hypothalamus, heart and skeletal muscle.

The protein localises to the nucleus. It localises to the cytoplasm. Its function is as follows. Pseudokinase which, in complex with CAB39/MO25 (CAB39/MO25alpha or CAB39L/MO25beta), binds to and activates STK11/LKB1. Adopts a closed conformation typical of active protein kinases and binds STK11/LKB1 as a pseudosubstrate, promoting conformational change of STK11/LKB1 in an active conformation. The sequence is that of STE20-related kinase adapter protein alpha (STRADA) from Gallus gallus (Chicken).